A 2230-amino-acid polypeptide reads, in one-letter code: DNA polymerase epsilon catalytic subunit A (2230 aa).

A compositionally biased stretch (polar residues) spans 1–19; sequence MPTRQPSKYGNKFRSSSAS. Residues 1–24 form a disordered region; it reads MPTRQPSKYGNKFRSSSASFKPKR. Zn(2+) is bound by residues Cys2101, Cys2104, Cys2136, and Cys2139. The CysA-type zinc-finger motif lies at 2101 to 2139; sequence CNACCLIRDLDLCRDEDVLPEMGSDPNKAAPKPWRCPFC. Cys2170, Cys2173, Cys2185, and Cys2187 together coordinate [4Fe-4S] cluster. The CysB motif motif lies at 2170–2187; sequence CSKCGGLKISDFMEHCSC.

It belongs to the DNA polymerase type-B family. Heterotetramer. Consists of 4 subunits: pol2, dpb2, dpb3 and dpb4. [4Fe-4S] cluster is required as a cofactor.

The protein resides in the nucleus. The enzyme catalyses DNA(n) + a 2'-deoxyribonucleoside 5'-triphosphate = DNA(n+1) + diphosphate. In terms of biological role, DNA polymerase II participates in chromosomal DNA replication. The protein is DNA polymerase epsilon catalytic subunit A (pol2) of Aspergillus fumigatus (strain ATCC MYA-4609 / CBS 101355 / FGSC A1100 / Af293) (Neosartorya fumigata).